A 195-amino-acid chain; its full sequence is PE-PGRS family protein PE_PGRS61 (195 aa).

This sequence belongs to the mycobacterial PE family. PGRS subfamily. In terms of assembly, interacts with human TLR2.

It localises to the secreted. Its subcellular location is the cell wall. The protein localises to the cell surface. Binding of Ca(2+) to PE_PGRS61 induces conformational changes and increases affinity for TLR2. Functionally, mediates Ca(2+)-dependent up-regulation of the anti-inflammatory cytokine IL-10. This Mycobacterium tuberculosis (strain ATCC 25618 / H37Rv) protein is PE-PGRS family protein PE_PGRS61.